The following is a 325-amino-acid chain: Phage-like element PBSX protein XkdQ (325 aa).

It to B.subtilis YqbQ.

In Bacillus subtilis (strain 168), this protein is Phage-like element PBSX protein XkdQ (xkdQ).